The following is a 469-amino-acid chain: Coumaroyl-CoA:anthocyanidin 3-O-glucoside-6''-O-coumaroyltransferase 1 (469 aa).

Residue Met1 is modified to N-acetylmethionine. Catalysis depends on proton acceptor residues His173 and Asp410.

Belongs to the plant acyltransferase family. In terms of tissue distribution, highly expressed in flowers, leaves and roots. Lower levels of expression in stems and siliques.

Involved in the acylation of the 6'' position of the 3-O-glucose residue of anthocyanin. Also able to use flavonol 3-glucosides as the acyl acceptor. This Arabidopsis thaliana (Mouse-ear cress) protein is Coumaroyl-CoA:anthocyanidin 3-O-glucoside-6''-O-coumaroyltransferase 1 (3AT1).